The chain runs to 446 residues: Alpha-galacturonidase (446 aa).

10 to 72 (IKIAYIGGGS…GRWRYEAVST (63 aa)) contacts NAD(+). Residue asparagine 151 coordinates substrate. Cysteine 173 contributes to the Mn(2+) binding site. Catalysis depends on histidine 174, which acts as the Proton donor. Histidine 210 contributes to the Mn(2+) binding site.

It belongs to the glycosyl hydrolase 4 family. Homotetramer. Requires NAD(+) as cofactor. Mn(2+) serves as cofactor.

It carries out the reaction [(1-&gt;4)-alpha-D-galacturonosyl](n) + H2O = alpha-D-galacturonate + [(1-&gt;4)-alpha-D-galacturonosyl](n-1). Its function is as follows. Alpha-galacturonidase able to catalyze the hydrolysis of the chromogenic substrate p-nitrophenyl-alpha-D-galacturonic acid (pNPalphaGalUA), and of the probable natural substrate alpha-1,4-di-galacturonate (GalUA(2)). Can neither hydrolyze pNPbetaGalUA, nor the stereoisomeric pNPalphaGlcUA. Does not display alpha- or beta-glucosidase activity as it fails to hydrolyze melibiose, raffinose, lactose and the chromogenic analogs, pNPalphaGal and pNPbetaGal. Cannot use the following compounds as substrates: pNP-N-acetyl-alpha- and beta-D-galactosaminide, pNP-N-acetyl-alpha- and beta-D-glucosaminide, pNP-alpha-L- and beta-L-arabinopyranoside, pNP-alpha- and beta-D-glucuronide, pNP-alpha- and beta-D-glucopyranoside, pNP-alpha- and beta-D-glucopyranoside 6-phosphate, pNP-alpha-D-galactopyranoside 6-phosphate and oNP-beta-D-galactopyranoside 6-phosphate. This Bacillus subtilis (strain 168) protein is Alpha-galacturonidase (lplD).